Reading from the N-terminus, the 1163-residue chain is Reticulon-4 (1163 aa).

N-acetylmethionine is present on methionine 1. 2 disordered regions span residues 1–184 (MEDI…AASE) and 244–270 (SAVS…RATN). Residues 1–989 (MEDIDQSSLV…LYWRDIKKTG (989 aa)) lie on the Cytoplasmic side of the membrane. Serine 7 and serine 16 each carry phosphoserine. Residues 7 to 16 (SSLVSSSTDS) are compositionally biased toward low complexity. Residues 31 to 55 (EPEDEEDEEEEEDEEEDDEDLEELE) are compositionally biased toward acidic residues. The segment covering 62-79 (AAGLSAAAVPPAAAAPLL) has biased composition (low complexity). Pro residues predominate over residues 87–101 (PPAPRGPLPAAPPAA). Serine 107 is modified (phosphoserine). Pro residues predominate over residues 138-147 (ARPPPPPPAG). A phosphoserine mark is found at serine 149, serine 169, and serine 171. A phosphoserine mark is found at serine 329, serine 333, and serine 343. The residue at position 347 (threonine 347) is a Phosphothreonine. A compositionally biased stretch (basic and acidic residues) spans 406 to 423 (DSLEQKSLGKDSEGRNED). Disordered stretches follow at residues 406–437 (DSLE…KDSS) and 454–474 (TANT…DEKK). Residue serine 425 is modified to Phosphoserine. Threonine 429 carries the phosphothreonine modification. A compositionally biased stretch (basic and acidic residues) spans 461–474 (LEDHTSENKTDEKK). Serine 488, serine 689, serine 726, serine 766, and serine 830 each carry phosphoserine. Threonine 832 bears the Phosphothreonine mark. A phosphoserine mark is found at serine 855, serine 922, and serine 962. Positions 976 to 1163 (VVDLLYWRDI…KIPGLKRKAD (188 aa)) constitute a Reticulon domain. The helical transmembrane segment at 990-1010 (VVFGASLFLLLSLTVFSIVSV) threads the bilayer. The Lumenal portion of the chain corresponds to 1011-1104 (TAYIALALLS…LMWVFTYVGA (94 aa)). Residue lysine 1075 is modified to N6-acetyllysine. Residues 1105 to 1125 (LFNGLTLLILALISLFSIPVI) traverse the membrane as a helical segment. Residues 1126-1163 (YERHQVQIDHYLGLANKSVKDAMAKIQAKIPGLKRKAD) are Cytoplasmic-facing.

As to quaternary structure, binds to RTN4R. Interacts with ATL1. Interacts with TMEM170A. Interacts with RTN4IP1. Interacts in trans with CNTNAP1. Interacts with REEP5. Interacts with synaptic plasticity regulator PANTS; the interaction results in enhanced RTN4-mediated inhibition of AMPA receptor clustering. Interacts with GPR50. In terms of assembly, homodimer. Interacts with BAD/Bcl-xl and BCL2. Interact with RTN3. Interacts with NGBR. Interacts with SPTLC1. Interacts with GRAMD4. Interacts with CDH5. Interacts with BACE1 and BACE2. Interacts with REEP5. Interacts with RETREG3. As to quaternary structure, interacts with BACE1 and BACE2. Interacts with TMEM33. As to expression, isoforms A, B and C are present in optic nerve, spinal cord and cerebral cortex. Isoforms A and B are present in dorsal root ganglion, sciatic nerve and PC12 cells after longer exposure. Isoforms B and C are detected in kidney, cartilage, skin, lung and spleen. Isoform C is expressed at high level in skeletal muscle. In adult animals isoform A is expressed mainly in the nervous system.

It localises to the endoplasmic reticulum membrane. It is found in the cell membrane. The protein resides in the synapse. Its subcellular location is the cell junction. Its function is as follows. Required to induce the formation and stabilization of endoplasmic reticulum (ER) tubules. They regulate membrane morphogenesis in the ER by promoting tubular ER production. They influence nuclear envelope expansion, nuclear pore complex formation and proper localization of inner nuclear membrane proteins. However each isoform have specific functions mainly depending on their tissue expression specificities. Developmental neurite growth regulatory factor with a role as a negative regulator of axon-axon adhesion and growth, and as a facilitator of neurite branching. Regulates neurite fasciculation, branching and extension in the developing nervous system. Involved in down-regulation of growth, stabilization of wiring and restriction of plasticity in the adult CNS. Regulates the radial migration of cortical neurons via an RTN4R-LINGO1 containing receptor complex. Acts as a negative regulator of central nervous system angiogenesis. Inhibits spreading, migration and sprouting of primary brain microvascular endothelial cells (MVECs). Also induces the retraction of MVECs lamellipodia and filopodia in a ROCK pathway-dependent manner. Functionally, mainly function in endothelial cells and vascular smooth muscle cells, is also involved in immune system regulation. Modulator of vascular remodeling, promotes the migration of endothelial cells but inhibits the migration of vascular smooth muscle cells. Regulates endothelial sphingolipid biosynthesis with direct effects on vascular function and blood pressure. Inhibits serine palmitoyltransferase, SPTLC1, the rate-limiting enzyme of the novo sphingolipid biosynthetic pathway, thereby controlling production of endothelial sphingosine-1-phosphate (S1P). Required to promote macrophage homing and functions such as cytokine/chemokine gene expression involved in angiogenesis, arteriogenesis and tissue repair. Mediates ICAM1 induced transendothelial migration of leukocytes such as monocytes and neutrophils and acute inflammation. Necessary for immune responses triggered by nucleic acid sensing TLRs, such as TLR9, is required for proper TLR9 location to endolysosomes. Also involved in immune response to LPS. Plays a role in liver regeneration through the modulation of hepatocytes proliferation. Reduces the anti-apoptotic activity of Bcl-xl and Bcl-2. This is likely consecutive to their change in subcellular location, from the mitochondria to the endoplasmic reticulum, after binding and sequestration. With isoform C, inhibits BACE1 activity and amyloid precursor protein processing. In terms of biological role, regulates cardiomyocyte apoptosis upon hypoxic conditions. With isoform B, inhibits BACE1 activity and amyloid precursor protein processing. The sequence is that of Reticulon-4 (Rtn4) from Rattus norvegicus (Rat).